We begin with the raw amino-acid sequence, 72 residues long: Large ribosomal subunit protein bL31 (72 aa).

Zn(2+) contacts are provided by cysteine 16, cysteine 18, cysteine 37, and cysteine 40.

The protein belongs to the bacterial ribosomal protein bL31 family. Type A subfamily. In terms of assembly, part of the 50S ribosomal subunit. The cofactor is Zn(2+).

Binds the 23S rRNA. The protein is Large ribosomal subunit protein bL31 of Buchnera aphidicola subsp. Acyrthosiphon pisum (strain Tuc7).